We begin with the raw amino-acid sequence, 214 residues long: Endosomal/vacuolar adapter protein YPT35 (214 aa).

Residues 1-63 form a disordered region; the sequence is MNDKISFLPP…ATITRTRPRR (63 aa). The PxP motif lies at 5 to 15; the sequence is ISFLPPEPIQL. A compositionally biased stretch (acidic residues) spans 16–31; the sequence is LDEDSTEPELDIDSQQ. Low complexity predominate over residues 38 to 58; sequence SASNSNDSTSHSNDCGATITR. 2 positions are modified to phosphoserine: Ser-65 and Ser-66. Residues 73 to 213 enclose the PX domain; that stretch reads FQKAHVSDCT…IQFLEPSKRV (141 aa).

It belongs to the YPT35 family. Interacts with RBD2, YIF1, YIP1 and YIP4.

It localises to the endosome membrane. Its subcellular location is the vacuole membrane. Recruits the lipid transfer protein VPS13 to endosomal and vacuolar membranes. The sequence is that of Endosomal/vacuolar adapter protein YPT35 (YPT35) from Saccharomyces cerevisiae (strain YJM789) (Baker's yeast).